The primary structure comprises 360 residues: Peptide chain release factor 1 (360 aa).

N5-methylglutamine is present on Gln-235. The span at 284–293 (QRRQQEESST) shows a compositional bias: basic and acidic residues. The disordered stretch occupies residues 284-311 (QRRQQEESSTRRNLLGSGDRSDRIRTYN).

It belongs to the prokaryotic/mitochondrial release factor family. Methylated by PrmC. Methylation increases the termination efficiency of RF1.

It localises to the cytoplasm. Its function is as follows. Peptide chain release factor 1 directs the termination of translation in response to the peptide chain termination codons UAG and UAA. This chain is Peptide chain release factor 1, found in Sodalis glossinidius (strain morsitans).